The following is a 745-amino-acid chain: Cytoskeleton-associated protein 2-like (745 aa).

Disordered stretches follow at residues 26–305, 319–362, 422–483, and 608–638; these read KGKL…VNRV, PATE…LGPQ, FPPQ…TYKR, and EAVT…PCPS. Polar residues-rich tracts occupy residues 67–89 and 101–136; these read SKTT…ASQK and GLTS…SRNP. The short motif at 183–185 is the KEN box element; sequence KEN. Positions 192 to 202 are enriched in basic and acidic residues; it reads KPEKPDPELHS. Lysine 195 participates in a covalent cross-link: Glycyl lysine isopeptide (Lys-Gly) (interchain with G-Cter in SUMO1); alternate. Residue lysine 195 forms a Glycyl lysine isopeptide (Lys-Gly) (interchain with G-Cter in SUMO2); alternate linkage. 4 stretches are compositionally biased toward polar residues: residues 205–216, 224–233, 242–253, and 284–301; these read KPNTGSSNQTQK, LSKSSVTQTA, FIRNTQIRTQAV, and NKTQ…QDIT. A compositionally biased stretch (polar residues) spans 427–442; that stretch reads HFLNKTAPRTQASTAA. Positions 459-475 are enriched in basic and acidic residues; that stretch reads KKPEGEDRRKQLEEWQK. Polar residues predominate over residues 608–624; the sequence is EAVTSDTSAAGTNTTSA. Serine 745 is modified (phosphoserine).

This sequence belongs to the CKAP2 family. In terms of processing, ubiquitinated by the anaphase promoting complex/cyclosome (APC/C). Highly expressed in regions of active neurogenesis and neural stem/progenitor cells (NSPCs), both embryonic and adult, not detected in lung, liver, kidney, heart, and skeletal muscle.

The protein localises to the cytoplasm. The protein resides in the cytoskeleton. It localises to the spindle pole. Its function is as follows. Microtubule-associated protein required for mitotic spindle formation and cell-cycle progression in neural progenitor cells. In Mus musculus (Mouse), this protein is Cytoskeleton-associated protein 2-like (Ckap2l).